The following is a 97-amino-acid chain: Large ribosomal subunit protein eL21 (97 aa).

The segment at 1–26 (MQKSEGFRSKTRYKLQKHPRQKGMAP) is disordered. A compositionally biased stretch (basic residues) spans 9–21 (SKTRYKLQKHPRQ).

This sequence belongs to the eukaryotic ribosomal protein eL21 family.

The protein is Large ribosomal subunit protein eL21 of Methanococcus maripaludis (strain C5 / ATCC BAA-1333).